The sequence spans 94 residues: MAKEELIQFEGLVTEILPDARYRVQLDAGHEIVAYTAGKMKKNRIKTLAGDRVTIEMSPYDLEKGRLIFRHKDERPGGTGAPRSGPPRGQFRRR.

The 72-residue stretch at 1-72 (MAKEELIQFE…EKGRLIFRHK (72 aa)) folds into the S1-like domain. A disordered region spans residues 71–94 (HKDERPGGTGAPRSGPPRGQFRRR).

Belongs to the IF-1 family. Component of the 30S ribosomal translation pre-initiation complex which assembles on the 30S ribosome in the order IF-2 and IF-3, IF-1 and N-formylmethionyl-tRNA(fMet); mRNA recruitment can occur at any time during PIC assembly.

It is found in the cytoplasm. Its function is as follows. One of the essential components for the initiation of protein synthesis. Stabilizes the binding of IF-2 and IF-3 on the 30S subunit to which N-formylmethionyl-tRNA(fMet) subsequently binds. Helps modulate mRNA selection, yielding the 30S pre-initiation complex (PIC). Upon addition of the 50S ribosomal subunit IF-1, IF-2 and IF-3 are released leaving the mature 70S translation initiation complex. This chain is Translation initiation factor IF-1, found in Rhodopseudomonas palustris (strain HaA2).